A 1034-amino-acid polypeptide reads, in one-letter code: Beta-galactosidase (1034 aa).

Residues asparagine 108 and aspartate 207 each contribute to the substrate site. Aspartate 207 serves as a coordination point for Na(+). Mg(2+) is bound by residues glutamate 423, histidine 425, and glutamate 468. Substrate contacts are provided by residues glutamate 468 and 544 to 547 (EYAH). Residue glutamate 468 is the Proton donor of the active site. The Nucleophile role is filled by glutamate 544. Asparagine 604 is a binding site for Mg(2+). 2 residues coordinate Na(+): phenylalanine 608 and asparagine 611. Residues asparagine 611 and tryptophan 1010 each coordinate substrate.

This sequence belongs to the glycosyl hydrolase 2 family. Homotetramer. Mg(2+) is required as a cofactor. Na(+) serves as cofactor.

It catalyses the reaction Hydrolysis of terminal non-reducing beta-D-galactose residues in beta-D-galactosides.. This is Beta-galactosidase from Klebsiella pneumoniae.